A 553-amino-acid polypeptide reads, in one-letter code: MAAPAGGGGSAVSVLAPNGRRHTVKVTPSTVLLQVLEDTCRRQDFNPCEYDLKFQRSVLDLSLQWRFANLPNNAKLEMVPASRSREGPENMVRIALQLDDGSRLQDSFCSGQTLWELLSHFPQIRECLQHPGGATPVCVYTRDEVTGEAALRGTTLQSLGLTGGSATIRFVMKCYDPVGKTPGSLGSSASAGQAAASAPLPLESGELSRGDLSRPEDADTSGPCCEHTQEKQSTRAPAAAPFVPFSGGGQRLGGPPGPTRPLTSSSAKLPKSLSSPGGPSKPKKSKSGQDPQQEQEQERERDPQQEQERERPVDREPVDREPVVCHPDLEERLQAWPAELPDEFFELTVDDVRRRLAQLKSERKRLEEAPLVTKAFREAQIKEKLERYPKVALRVLFPDRYVLQGFFRPSETVGDLRDFVRSHLGNPELSFYLFITPPKTVLDDHTQTLFQANLFPAALVHLGAEEPAGVYLEPGLLEHAISPSAADVLVARYMSRAAGSPSPLPAPDPAPKSEPAAEEGALVPPEPIPGTAQPVKRSLGKVPKWLKLPASKR.

A2 carries the N-acetylalanine modification. The span at 182 to 202 shows a compositional bias: low complexity; it reads PGSLGSSASAGQAAASAPLPL. The interval 182–324 is disordered; sequence PGSLGSSASA…REPVDREPVV (143 aa). S184 is subject to Phosphoserine. Positions 206 to 217 are enriched in basic and acidic residues; that stretch reads ELSRGDLSRPED. Residues 260-280 show a composition bias toward low complexity; it reads RPLTSSSAKLPKSLSSPGGPS. S275 bears the Phosphoserine mark. Over residues 296–324 the composition is skewed to basic and acidic residues; sequence EQERERDPQQEQERERPVDREPVDREPVV. Residues 317–380 form an interaction with GLUT4 region; it reads PVDREPVVCH…LVTKAFREAQ (64 aa). A UBX domain is found at 386–462; it reads ERYPKVALRV…NLFPAALVHL (77 aa). A disordered region spans residues 499–536; that stretch reads GSPSPLPAPDPAPKSEPAAEEGALVPPEPIPGTAQPVK. S500 and S502 each carry phosphoserine. Residues 502 to 512 show a composition bias toward pro residues; sequence SPLPAPDPAPK.

As to quaternary structure, interacts with GLUT4. Interacts with VCPKMT. Interacts with VCP. As to expression, ubiquitous. Highly expressed in testis, heart, skeletal muscle and pancreas.

Its subcellular location is the endomembrane system. It localises to the endoplasmic reticulum-Golgi intermediate compartment membrane. It is found in the cytoplasm. The protein resides in the nucleus. In terms of biological role, tethering protein that sequesters GLUT4-containing vesicles in the cytoplasm in the absence of insulin. Modulates the amount of GLUT4 that is available at the cell surface. Enhances VCP methylation catalyzed by VCPKMT. This chain is Tether containing UBX domain for GLUT4 (ASPSCR1), found in Homo sapiens (Human).